The primary structure comprises 363 residues: Protein arginine N-methyltransferase 2 (363 aa).

2 ANK repeats span residues 22–46 (AAQT…FQDD) and 48–80 (LGWS…AVDK). In terms of domain architecture, RMT2 spans 111-363 (KTSAGDNLVF…RLPIAKMSLI (253 aa)). Residues phenylalanine 120, 186–191 (FGLGIV), 209–211 (EAH), 236–237 (WQ), and aspartate 265 contribute to the S-adenosyl-L-methionine site.

It belongs to the class I-like SAM-binding methyltransferase superfamily. RMT2 methyltransferase family. As to quaternary structure, monomer.

The protein resides in the cytoplasm. Its subcellular location is the nucleus. Its function is as follows. S-adenosyl-L-methionine-dependent protein-arginine N-methyltransferase that methylates the delta-nitrogen atom of arginine residues to form N5-methylarginine (type IV) in target proteins. Monomethylates ribosomal protein L12. This chain is Protein arginine N-methyltransferase 2, found in Cryptococcus neoformans var. neoformans serotype D (strain B-3501A) (Filobasidiella neoformans).